A 167-amino-acid chain; its full sequence is Phosphopantetheine adenylyltransferase (167 aa).

Residue Thr10 coordinates substrate. Residues 10–11 (TF) and His18 contribute to the ATP site. 2 residues coordinate substrate: Ala77 and Arg91. ATP contacts are provided by residues 92 to 94 (GLR), Glu102, and 127 to 133 (YSFISSS).

Belongs to the bacterial CoaD family. Homohexamer. It depends on Mg(2+) as a cofactor.

It is found in the cytoplasm. It catalyses the reaction (R)-4'-phosphopantetheine + ATP + H(+) = 3'-dephospho-CoA + diphosphate. It participates in cofactor biosynthesis; coenzyme A biosynthesis; CoA from (R)-pantothenate: step 4/5. In terms of biological role, reversibly transfers an adenylyl group from ATP to 4'-phosphopantetheine, yielding dephospho-CoA (dPCoA) and pyrophosphate. In Thermomicrobium roseum (strain ATCC 27502 / DSM 5159 / P-2), this protein is Phosphopantetheine adenylyltransferase.